The sequence spans 244 residues: MDSSKITFEYETAYELLVRLGADGLFLHTSLPTLNKVLELVPGKCYELDGDIGSGKTQLCYSLAAKLLLTKKTAKIGWISAVPLRTDHLSQHISSTDADETSHLLDRIVCKRVEMVSELRDSLNALCETINMQLVIVENIDAILHDTAYDREMGRNVQIDISERLRKLTRSGITVMVTNHITYWRGYPAPALGNFWASQIENRFFVERRSEESNVRSVSTMRGGNEKTIRVDFEISDGGLKAVV.

In terms of assembly, interacts with brc-2 and rad-51.

Its subcellular location is the nucleus. In terms of biological role, has a role in the homologous recombination repair (HRR) of genomic DNA during meiosis. Required for rad-51 recruitment onto ssDNA gaps generated at stalled replication fork barriers. The protein is RAD51-like protein 1 of Caenorhabditis briggsae.